Here is a 360-residue protein sequence, read N- to C-terminus: Phospho-N-acetylmuramoyl-pentapeptide-transferase (360 aa).

The next 10 membrane-spanning stretches (helical) occupy residues tyrosine 21–glycine 41, methionine 74–glycine 94, tyrosine 97–tyrosine 117, tyrosine 134–serine 154, valine 168–serine 188, glycine 199–serine 219, serine 236–phenylalanine 256, valine 263–leucine 283, isoleucine 288–valine 308, and valine 338–lysine 358.

This sequence belongs to the glycosyltransferase 4 family. MraY subfamily. It depends on Mg(2+) as a cofactor.

Its subcellular location is the cell inner membrane. It carries out the reaction UDP-N-acetyl-alpha-D-muramoyl-L-alanyl-gamma-D-glutamyl-meso-2,6-diaminopimeloyl-D-alanyl-D-alanine + di-trans,octa-cis-undecaprenyl phosphate = di-trans,octa-cis-undecaprenyl diphospho-N-acetyl-alpha-D-muramoyl-L-alanyl-D-glutamyl-meso-2,6-diaminopimeloyl-D-alanyl-D-alanine + UMP. Its pathway is cell wall biogenesis; peptidoglycan biosynthesis. Its function is as follows. Catalyzes the initial step of the lipid cycle reactions in the biosynthesis of the cell wall peptidoglycan: transfers peptidoglycan precursor phospho-MurNAc-pentapeptide from UDP-MurNAc-pentapeptide onto the lipid carrier undecaprenyl phosphate, yielding undecaprenyl-pyrophosphoryl-MurNAc-pentapeptide, known as lipid I. The polypeptide is Phospho-N-acetylmuramoyl-pentapeptide-transferase (Shewanella loihica (strain ATCC BAA-1088 / PV-4)).